The sequence spans 399 residues: Phosphoprotein (399 aa).

2 stretches are compositionally biased toward polar residues: residues 30–46 (ATSQ…SSRT) and 82–112 (GRQN…LPSP). The disordered stretch occupies residues 30-112 (ATSQSSLNKP…MGSDTQLPSP (83 aa)). A multimerization region spans residues 224–287 (NYASEILDAI…ITTMKIMDPG (64 aa)). Residues 226–253 (ASEILDAIKALEVRLDRIEGKVDKIMLT) adopt a coiled-coil conformation.

Belongs to the rubulavirus/avulavirus P protein family. As to quaternary structure, homotetramer. Interacts (via multimerization domain) with polymerase L; this interaction forms the polymerase L-P complex. Interacts (via N-terminus) with N0 (via Ncore); this interaction allows P to chaperon N0 to avoid N polymerization before encapsidation. Interacts (via C-terminus) with N-RNA template; this interaction positions the polymerase on the template for both transcription and replication.

Its function is as follows. Essential cofactor of the RNA polymerase L that plays a central role in the transcription and replication by forming the polymerase complex with RNA polymerase L and recruiting L to the genomic N-RNA template for RNA synthesis. Also plays a central role in the encapsidation of nascent RNA chains by forming the encapsidation complex with the nucleocapsid protein N (N-P complex). Acts as a chaperone for newly synthesized free N protein, so-called N0, allowing encapsidation of nascent RNA chains during replication. The nucleoprotein protein N prevents excessive phosphorylation of P, which leads to down-regulation of viral transcription/ replication. Participates, together with N, in the formation of viral factories (viroplasms), which are large inclusions in the host cytoplasm where replication takes place. The protein is Phosphoprotein (P/V) of Human parainfluenza 4a virus (strain Toshiba) (HPIV-4a).